Here is a 743-residue protein sequence, read N- to C-terminus: Catalase-peroxidase (743 aa).

Residues Met-1–Pro-21 form a disordered region. A cross-link (tryptophyl-tyrosyl-methioninium (Trp-Tyr) (with M-257)) is located at residues Trp-108 to Tyr-231. The active-site Proton acceptor is the His-109. Residues Tyr-231 to Met-257 constitute a cross-link (tryptophyl-tyrosyl-methioninium (Tyr-Met) (with W-108)). A heme b-binding site is contributed by His-272. A disordered region spans residues Gly-275 to Glu-296.

Belongs to the peroxidase family. Peroxidase/catalase subfamily. In terms of assembly, homodimer or homotetramer. Heme b serves as cofactor. Post-translationally, formation of the three residue Trp-Tyr-Met cross-link is important for the catalase, but not the peroxidase activity of the enzyme.

It carries out the reaction H2O2 + AH2 = A + 2 H2O. The catalysed reaction is 2 H2O2 = O2 + 2 H2O. In terms of biological role, bifunctional enzyme with both catalase and broad-spectrum peroxidase activity. The sequence is that of Catalase-peroxidase from Parafrankia sp. (strain EAN1pec).